Here is a 147-residue protein sequence, read N- to C-terminus: Hemoglobin subunit beta-2 (147 aa).

Residues 3 to 147 enclose the Globin domain; the sequence is EWTDSERAII…VVSALGRQYH (145 aa). Heme b-binding residues include His64 and His93.

The protein belongs to the globin family. As to quaternary structure, hb 3 is a heterotetramer of two alpha-2 and two beta-2 chains. Red blood cells.

Its function is as follows. Involved in oxygen transport from gills to the various peripheral tissues. The chain is Hemoglobin subunit beta-2 (hbb2) from Boreogadus saida (Polar cod).